The chain runs to 223 residues: Protein-disulfide oxidoreductase DsbI (223 aa).

A helical transmembrane segment spans residues 26 to 46 (LLWLLMAVAMGALIILAHSFF). Cysteines 55 and 58 form a disulfide. 2 helical membrane passes run 59–78 (VYIR…AAIN) and 82–102 (IILK…GLKF). Cys127 and Cys153 are joined by a disulfide. A helical transmembrane segment spans residues 198–218 (CMLAFGMCLVLLVIMSGAWAL).

Belongs to the DsbB family. DsbI subfamily. Interacts with DsbL.

It is found in the cell inner membrane. Required for disulfide bond formation in some proteins. Part of a redox system composed of DsbI and DsbL that mediates formation of an essential disulfide bond in AssT. The chain is Protein-disulfide oxidoreductase DsbI from Escherichia coli O1:K1 / APEC.